A 197-amino-acid chain; its full sequence is MKKTTTLLGICAILSAPAFAAQLTLQKELVPRVINGEFVYPEWISDNNSIELKDGENQLAVTVGQIVFEDGKRRKFDSQPLLLEFDAEKDAELSLTYKTFRTIEEAKAFELDPKVVLKDKNGKEVDFSMVQLRKGGLQGFRDYEREVADYNNAVNKQATKSSIAQSPAVTKTLKESFNELSREEQQEFMQWAMRNLK.

The first 20 residues, 1–20, serve as a signal peptide directing secretion; that stretch reads MKKTTTLLGICAILSAPAFA.

The protein belongs to the UPF0319 family.

The protein is UPF0319 protein VP0761 of Vibrio parahaemolyticus serotype O3:K6 (strain RIMD 2210633).